The sequence spans 344 residues: Phenylalanine--tRNA ligase alpha subunit (344 aa).

A Mg(2+)-binding site is contributed by Glu269.

Belongs to the class-II aminoacyl-tRNA synthetase family. Phe-tRNA synthetase alpha subunit type 1 subfamily. As to quaternary structure, tetramer of two alpha and two beta subunits. It depends on Mg(2+) as a cofactor.

It localises to the cytoplasm. It carries out the reaction tRNA(Phe) + L-phenylalanine + ATP = L-phenylalanyl-tRNA(Phe) + AMP + diphosphate + H(+). The chain is Phenylalanine--tRNA ligase alpha subunit from Ralstonia pickettii (strain 12J).